Here is a 305-residue protein sequence, read N- to C-terminus: Ribosomal RNA small subunit methyltransferase H (305 aa).

S-adenosyl-L-methionine contacts are provided by residues 49–51 (GGH), Asp68, Phe100, Asp116, and Gln123.

It belongs to the methyltransferase superfamily. RsmH family.

The protein resides in the cytoplasm. The enzyme catalyses cytidine(1402) in 16S rRNA + S-adenosyl-L-methionine = N(4)-methylcytidine(1402) in 16S rRNA + S-adenosyl-L-homocysteine + H(+). In terms of biological role, specifically methylates the N4 position of cytidine in position 1402 (C1402) of 16S rRNA. In Synechocystis sp. (strain ATCC 27184 / PCC 6803 / Kazusa), this protein is Ribosomal RNA small subunit methyltransferase H.